Here is a 128-residue protein sequence, read N- to C-terminus: Large ribosomal subunit protein bL21 (128 aa).

Residues G104–H128 form a disordered region. The segment covering E116 to H128 has biased composition (basic and acidic residues).

It belongs to the bacterial ribosomal protein bL21 family. Part of the 50S ribosomal subunit. Contacts protein L20.

In terms of biological role, this protein binds to 23S rRNA in the presence of protein L20. This is Large ribosomal subunit protein bL21 from Nitrobacter hamburgensis (strain DSM 10229 / NCIMB 13809 / X14).